A 241-amino-acid chain; its full sequence is Neuroendocrine secretory protein 55 (241 aa).

The signal sequence occupies residues 1 to 46 (MDRRSRPQLGRRARHNYNDLCPPIGRRAATALLWLSCSIALLRALA). The segment at 71-241 (AAQVFPEPPE…KRGAIPIRRH (171 aa)) is disordered. The segment covering 97 to 125 (EYQEEEFDYESETESESEIESETEFETES) has biased composition (acidic residues). The segment covering 167-177 (PDASPSRAPPS) has biased composition (low complexity). The span at 182-198 (ESPRQGEEPEDKDPRDP) shows a compositional bias: basic and acidic residues. Residues 212-221 (QHRCKPKKPT) are compositionally biased toward basic residues.

Belongs to the NESP55 family. Post-translationally, binds keratan sulfate chains. In terms of processing, may be proteolytically processed to give rise to a number of active peptides. As to expression, highly expressed in adrenal medulla and anterior and posterior pituitary. In the brain, detected in hypothalamus, hippocampus, caudate nucleus, thalamus and, in significantly lower amounts, in the cerebellum.

It is found in the cytoplasmic vesicle. The protein resides in the secretory vesicle. It localises to the secreted. This chain is Neuroendocrine secretory protein 55, found in Bos taurus (Bovine).